The following is a 93-amino-acid chain: Small ribosomal subunit protein uS19 (93 aa).

Belongs to the universal ribosomal protein uS19 family.

Functionally, protein S19 forms a complex with S13 that binds strongly to the 16S ribosomal RNA. In Pediococcus pentosaceus (strain ATCC 25745 / CCUG 21536 / LMG 10740 / 183-1w), this protein is Small ribosomal subunit protein uS19.